A 1695-amino-acid polypeptide reads, in one-letter code: Protein TOPAZ1 (1695 aa).

Disordered regions lie at residues 1–128, 441–474, and 725–753; these read MRRH…DDPQ, MAQT…ELRR, and AEVR…NSVT. A compositionally biased stretch (basic residues) spans 43–52; it reads RRKNRQKRRM. Basic and acidic residues-rich tracts occupy residues 59 to 68, 92 to 113, and 459 to 474; these read GKDKVERDRS, SDRR…ERHT, and NEYH…ELRR. Positions 735–753 are enriched in polar residues; the sequence is SVSMTTSGPQTLSIQNSVT.

It localises to the cytoplasm. The protein localises to the cytosol. Its function is as follows. Important for normal spermatogenesis and male fertility. Specifically required for progression to the post-meiotic stages of spermatocyte development. Seems to be necessary for normal expression levels of a number of testis-expressed gene transcripts, although its role in this process is unclear. The chain is Protein TOPAZ1 (TOPAZ1) from Callithrix jacchus (White-tufted-ear marmoset).